The chain runs to 207 residues: MAALVEPLGLERDVSRAVELLERLQRSGELPPQKLQALQRVLQSRFCSAIREVYEQLYDTLDITGSAEVRAHATAKATVAAFTASEGHAHPRVVELPKTDEGLGFNIMGGKEQNSPIYISRVIPGGVADRHGGLKRGDQLLSVNGVSVEGEHHEKAVELLKAAQGSVKLVVRYTPRVLEEMEARFEKMRSARRRQQHHSYTSLESRG.

The Kinase interacting site motif lies at 1–13 (MAALVEPLGLERD). An L27 domain is found at 10–65 (LERDVSRAVELLERLQRSGELPPQKLQALQRVLQSRFCSAIREVYEQLYDTLDITG). The 83-residue stretch at 93 to 175 (VVELPKTDEG…SVKLVVRYTP (83 aa)) folds into the PDZ domain. The tract at residues 187–207 (KMRSARRRQQHHSYTSLESRG) is disordered. The span at 198–207 (HSYTSLESRG) shows a compositional bias: polar residues.

The protein belongs to the lin-7 family. Forms a complex with CASK and CASKIN1. Component of the brain-specific heterotrimeric complex (LIN-10-LIN-2-LIN-7 complex) composed of at least APBA1, CASK, and LIN7, which associates with the motor protein KIF17 to transport vesicles along microtubules. Forms a heterotrimeric complex composed of MMP5, LIN7B and PATJ; the N-terminal L27 domain of PALS1 interacts with the L27 domain of PATJ and the C-terminal L27 domain of PALS1 interacts with the L27 domain of LIN7B. Forms a heterotrimeric complex with DLG1 and CASK via their L27 domains. Interacts with DLG4 and GRIN2B as well as CDH1 and CTNNB1, the channels KCNJ12/Kir2.2, KCNJ4/Kir2.3 and probably KCNJ2/Kir2.1 and SLC6A12/BGT-1 via its PDZ domain. The association of LIN7A with cadherin and beta-catenin is calcium-dependent, occurs at synaptic junctions and requires the actin cytoskeleton. Interacts with EGFR, ERBB2, ERBB3 and ERBB4 with both PDZ and KID domains. Associates with KIF17 via APBA1. Interacts with ASIC3. Interacts with TOPK. Interacts with RTKN. Interacts with APBA1. Interacts with MPP7. Interacts with DLG2. Interacts with DLG3. As to expression, expressed in the kidney; predominantly in the vasa recta.

It localises to the cell membrane. It is found in the basolateral cell membrane. Its subcellular location is the cell junction. The protein resides in the postsynaptic density membrane. The protein localises to the tight junction. In terms of biological role, plays a role in establishing and maintaining the asymmetric distribution of channels and receptors at the plasma membrane of polarized cells. Forms membrane-associated multiprotein complexes that may regulate delivery and recycling of proteins to the correct membrane domains. The tripartite complex composed of LIN7 (LIN7A, LIN7B or LIN7C), CASK and APBA1 associates with the motor protein KIF17 to transport vesicles containing N-methyl-D-aspartate (NMDA) receptor subunit NR2B along microtubules. This complex may have the potential to couple synaptic vesicle exocytosis to cell adhesion in brain. Ensures the proper localization of GRIN2B (subunit 2B of the NMDA receptor) to neuronal postsynaptic density and may function in localizing synaptic vesicles at synapses where it is recruited by beta-catenin and cadherin. Required to localize Kir2 channels, GABA transporter (SLC6A12) and EGFR/ERBB1, ERBB2, ERBB3 and ERBB4 to the basolateral membrane of epithelial cells. May increase the amplitude of ASIC3 acid-evoked currents by stabilizing the channel at the cell surface. The polypeptide is Protein lin-7 homolog B (Lin7b) (Mus musculus (Mouse)).